A 312-amino-acid polypeptide reads, in one-letter code: uncharacterized protein (312 aa).

The segment at 95–119 is disordered; it reads EKRRENPPKLTLPPLPPPAEERKKP.

Its subcellular location is the plastid. The protein resides in the chloroplast. This is an uncharacterized protein from Chlamydomonas moewusii (Chlamydomonas eugametos).